Here is a 555-residue protein sequence, read N- to C-terminus: Luciferin 2-monooxygenase (555 aa).

A signal peptide spans 1–11 (MKIIILSVILA). 2 VWFD domains span residues 80-266 (IECR…EYCK) and 319-494 (GTCV…RLCN). 4 disulfide bridges follow: Cys82-Cys222, Cys321-Cys454, Cys343-Cys493, and Cys352-Cys451. 2 N-linked (GlcNAc...) asparagine glycosylation sites follow: Asn186 and Asn408.

Post-translationally, the cysteine residues presumably exist in intramolecular disulfide bridges. The N-terminus is blocked.

It catalyses the reaction Cypridina luciferin + O2 = oxidized Cypridina luciferin + hnu + CO2. This chain is Luciferin 2-monooxygenase, found in Vargula hilgendorfii (Sea firefly).